Here is a 370-residue protein sequence, read N- to C-terminus: Queuine tRNA-ribosyltransferase (370 aa).

D89 acts as the Proton acceptor in catalysis. Substrate contacts are provided by residues 89–93, D143, Q187, and G214; that span reads DSGGF. Positions 245-251 are RNA binding; the sequence is GVGKPEN. D264 functions as the Nucleophile in the catalytic mechanism. The tract at residues 269-273 is RNA binding; important for wobble base 34 recognition; sequence TRNAR. The Zn(2+) site is built by C302, C304, C307, and H333.

It belongs to the queuine tRNA-ribosyltransferase family. Homodimer. Within each dimer, one monomer is responsible for RNA recognition and catalysis, while the other monomer binds to the replacement base PreQ1. The cofactor is Zn(2+).

The catalysed reaction is 7-aminomethyl-7-carbaguanine + guanosine(34) in tRNA = 7-aminomethyl-7-carbaguanosine(34) in tRNA + guanine. The protein operates within tRNA modification; tRNA-queuosine biosynthesis. Functionally, catalyzes the base-exchange of a guanine (G) residue with the queuine precursor 7-aminomethyl-7-deazaguanine (PreQ1) at position 34 (anticodon wobble position) in tRNAs with GU(N) anticodons (tRNA-Asp, -Asn, -His and -Tyr). Catalysis occurs through a double-displacement mechanism. The nucleophile active site attacks the C1' of nucleotide 34 to detach the guanine base from the RNA, forming a covalent enzyme-RNA intermediate. The proton acceptor active site deprotonates the incoming PreQ1, allowing a nucleophilic attack on the C1' of the ribose to form the product. After dissociation, two additional enzymatic reactions on the tRNA convert PreQ1 to queuine (Q), resulting in the hypermodified nucleoside queuosine (7-(((4,5-cis-dihydroxy-2-cyclopenten-1-yl)amino)methyl)-7-deazaguanosine). This is Queuine tRNA-ribosyltransferase from Hamiltonella defensa subsp. Acyrthosiphon pisum (strain 5AT).